Here is a 127-residue protein sequence, read N- to C-terminus: Fumarate reductase subunit C (127 aa).

Transmembrane regions (helical) follow at residues 30-50 (ATVL…GSLV), 67-87 (VVIA…HTFF), and 107-127 (IIVL…LIVV).

The protein belongs to the FrdC family. Part of an enzyme complex containing four subunits: a flavoprotein (FrdA), an iron-sulfur protein (FrdB), and two hydrophobic anchor proteins (FrdC and FrdD).

It is found in the cell inner membrane. Anchors the catalytic components of the fumarate reductase complex to the cell membrane, binds quinones. The sequence is that of Fumarate reductase subunit C from Vibrio vulnificus (strain CMCP6).